A 512-amino-acid chain; its full sequence is UDP-N-acetylmuramate--L-alanine ligase (512 aa).

ATP is bound at residue 132 to 138 (GAHGKTT).

The protein belongs to the MurCDEF family.

Its subcellular location is the cytoplasm. It catalyses the reaction UDP-N-acetyl-alpha-D-muramate + L-alanine + ATP = UDP-N-acetyl-alpha-D-muramoyl-L-alanine + ADP + phosphate + H(+). It participates in cell wall biogenesis; peptidoglycan biosynthesis. In terms of biological role, cell wall formation. The sequence is that of UDP-N-acetylmuramate--L-alanine ligase from Bifidobacterium longum (strain NCC 2705).